The chain runs to 101 residues: Small ribosomal subunit protein uS14 (101 aa).

Belongs to the universal ribosomal protein uS14 family. Part of the 30S ribosomal subunit. Contacts proteins S3 and S10.

Its function is as follows. Binds 16S rRNA, required for the assembly of 30S particles and may also be responsible for determining the conformation of the 16S rRNA at the A site. The sequence is that of Small ribosomal subunit protein uS14 from Rhizobium johnstonii (strain DSM 114642 / LMG 32736 / 3841) (Rhizobium leguminosarum bv. viciae).